We begin with the raw amino-acid sequence, 713 residues long: Cadherin-13 (713 aa).

The N-terminal stretch at M1–A22 is a signal peptide. A propeptide spanning residues E23–R138 is cleaved from the precursor. N-linked (GlcNAc...) asparagine glycans are attached at residues N52 and N86. Cadherin domains follow at residues S139–F245, R246–F363, T364–F477, Y478–I585, and F584–A694. Positions P156–K178 are disordered. Basic and acidic residues predominate over residues D158 to K172. N-linked (GlcNAc...) asparagine glycosylation is found at N382, N489, N500, N530, N598, N638, and N671. G693 carries the GPI-anchor amidated glycine lipid modification. The propeptide at A694–L713 is removed in mature form.

By contrast to classical cadherins, homodimerization in trans is not mediated by cadherin EC1 domain strand-swapping, but instead through a homophilic adhesive interface which joins two elongated EC1-EC2 domains through a region near their Ca2+-binding sites to form a tetrahedral, X-like shape.

It localises to the cell membrane. Its subcellular location is the cytoplasm. Its function is as follows. Cadherins are calcium-dependent cell adhesion proteins. They preferentially interact with themselves in a homophilic manner in connecting cells; cadherins may thus contribute to the sorting of heterogeneous cell types. May act as a negative regulator of neural cell growth. The chain is Cadherin-13 (CDH13) from Bos taurus (Bovine).